Consider the following 217-residue polypeptide: MVQDLEQKLWSIASGIPFSSDYFLQASPIRKLKKENLFSKVFETYFLELGSGWGEVAISMALQRPNTGFILMEKKFDRIRHTIREIEKHSLDNVKILCVNFNWFLEEVFEENLFSEILLNFPDPWPKKRHHKKRTVNSKFLESLKILLPEKGKFYFATDYGPYARKVIRLFRDSKAFSPEKVELKSERNEIPVSHFERKKREEGKRIYYIDRVLVQK.

S-adenosyl-L-methionine is bound by residues Glu48, Glu73, Asn100, and Asp123. Asp123 is an active-site residue. Substrate is bound by residues Lys127 and Asp159.

It belongs to the class I-like SAM-binding methyltransferase superfamily. TrmB family.

It catalyses the reaction guanosine(46) in tRNA + S-adenosyl-L-methionine = N(7)-methylguanosine(46) in tRNA + S-adenosyl-L-homocysteine. The protein operates within tRNA modification; N(7)-methylguanine-tRNA biosynthesis. In terms of biological role, catalyzes the formation of N(7)-methylguanine at position 46 (m7G46) in tRNA. The protein is tRNA (guanine-N(7)-)-methyltransferase of Leptospira interrogans serogroup Icterohaemorrhagiae serovar Lai (strain 56601).